The chain runs to 501 residues: MGNKQGKMDVILIGAGIMSATLGTLLKELAPEWDIVVFERLEEAGAESSNEWNNAGTGHAALCELNYTVEKADGSIDIGKAIKINEQFYVSLQFWAYLVNSGILRDPKDFVRPLPHMSFVQGEDNVAFLKKRHETMAANPLFKGMEFTDDPKKLAEWVPLMMEGRVVDEPIAATRIESGTDVNFGALTRQLFEHLKRKNVEIRYRHHVEDIKRTSDGLWELKVRNLDTGTVELHAAKFVFIGAGGGSLHLLQKSGIPEGKGIGGFPVSGLFMVCNNPEVVEQHHAKVYGKAKVGAPPMSVPHLDTRFIDNQKMLLFGPFAGFSPKFLKNGSMLDLFTSIKPHNVLTILAAGVKNMSLTNYLIQQVLLSKEQRMQELREFVPTAKSDEWDIVVAGQRVQVIKDTESGGKGTLQFGTEVVHAADGSIAALLGASPGASTAVHVMLEVMEKCFPERMNEWRAKVKEMIPSYGESLMKNEALLRQVQASTAEALGLNGHFAMQLA.

Belongs to the MQO family. FAD is required as a cofactor.

The enzyme catalyses (S)-malate + a quinone = a quinol + oxaloacetate. Its pathway is carbohydrate metabolism; tricarboxylic acid cycle; oxaloacetate from (S)-malate (quinone route): step 1/1. The protein is Probable malate:quinone oxidoreductase of Geobacillus kaustophilus (strain HTA426).